The following is a 186-amino-acid chain: Coiled-coil domain-containing protein ORF13 (186 aa).

Coiled-coil stretches lie at residues 2 to 30 and 63 to 85; these read GIKE…DFIK and LREK…QRDK.

The chain is Coiled-coil domain-containing protein ORF13 from Helicobacter pylori (strain 35A).